The chain runs to 109 residues: Putative glutaredoxin-C11 (109 aa).

The region spanning 2–108 (AEMVARLASE…PLLKSAGALW (107 aa)) is the Glutaredoxin domain. An intrachain disulfide couples Cys22 to Cys25. A Responsive for interaction with TGA factors motif is present at residues 106 to 109 (ALWL).

Belongs to the glutaredoxin family. CC-type subfamily.

It is found in the cytoplasm. The protein localises to the nucleus. Functionally, has a glutathione-disulfide oxidoreductase activity in the presence of NADPH and glutathione reductase. Reduces low molecular weight disulfides and proteins. This Oryza sativa subsp. japonica (Rice) protein is Putative glutaredoxin-C11 (GRXC11).